The following is an 83-amino-acid chain: UPF0512 protein W (83 aa).

This sequence belongs to the UPF0512 family.

The sequence is that of UPF0512 protein W from Dictyostelium discoideum (Social amoeba).